The sequence spans 218 residues: Small ribosomal subunit protein uS3 (218 aa).

The KH type-2 domain occupies 38–106; it reads LRSDLKKKLM…PVHLNIEEVK (69 aa).

Belongs to the universal ribosomal protein uS3 family. As to quaternary structure, part of the 30S ribosomal subunit. Forms a tight complex with proteins S10 and S14.

In terms of biological role, binds the lower part of the 30S subunit head. Binds mRNA in the 70S ribosome, positioning it for translation. The protein is Small ribosomal subunit protein uS3 of Legionella pneumophila (strain Lens).